The primary structure comprises 202 residues: LexA repressor 2 (202 aa).

A DNA-binding region (H-T-H motif) is located at residues 28-48 (LAEISEAFGFASRSVARKHIV). Active-site for autocatalytic cleavage activity residues include Ser-123 and Lys-160.

This sequence belongs to the peptidase S24 family. Homodimer.

The enzyme catalyses Hydrolysis of Ala-|-Gly bond in repressor LexA.. Its function is as follows. Represses a number of genes involved in the response to DNA damage (SOS response), including recA and lexA. In the presence of single-stranded DNA, RecA interacts with LexA causing an autocatalytic cleavage which disrupts the DNA-binding part of LexA, leading to derepression of the SOS regulon and eventually DNA repair. This chain is LexA repressor 2, found in Pseudomonas syringae pv. tomato (strain ATCC BAA-871 / DC3000).